Consider the following 698-residue polypeptide: RNA cytosine-C(5)-methyltransferase NSUN2 (698 aa).

Over residues methionine 1 to glutamine 10 the composition is skewed to basic residues. The segment at methionine 1 to glutamate 28 is disordered. Over residues arginine 11–glutamate 28 the composition is skewed to basic and acidic residues. Residues cysteine 182 to lysine 188, aspartate 213, aspartate 240, and aspartate 266 each bind S-adenosyl-L-methionine. Cysteine 319 acts as the Nucleophile in catalysis. The segment at alanine 472–cysteine 496 is disordered. Positions proline 482–aspartate 493 are enriched in polar residues.

This sequence belongs to the class I-like SAM-binding methyltransferase superfamily. RsmB/NOP family. TRM4 subfamily.

The protein resides in the nucleus. It localises to the nucleolus. It is found in the cytoplasm. Its subcellular location is the mitochondrion. The protein localises to the cytoskeleton. The protein resides in the spindle. It localises to the secreted. It is found in the extracellular exosome. It carries out the reaction cytidine(48) in tRNA + S-adenosyl-L-methionine = 5-methylcytidine(48) in tRNA + S-adenosyl-L-homocysteine + H(+). The catalysed reaction is cytidine(49) in tRNA + S-adenosyl-L-methionine = 5-methylcytidine(49) in tRNA + S-adenosyl-L-homocysteine + H(+). It catalyses the reaction cytidine(50) in tRNA + S-adenosyl-L-methionine = 5-methylcytidine(50) in tRNA + S-adenosyl-L-homocysteine + H(+). The enzyme catalyses cytidine(34) in tRNA precursor + S-adenosyl-L-methionine = 5-methylcytidine(34) in tRNA precursor + S-adenosyl-L-homocysteine + H(+). It carries out the reaction a cytidine in mRNA + S-adenosyl-L-methionine = a 5-methylcytidine in mRNA + S-adenosyl-L-homocysteine + H(+). Its function is as follows. RNA cytosine C(5)-methyltransferase that methylates cytosine to 5-methylcytosine (m5C) in various RNAs, such as tRNAs, mRNAs and some long non-coding RNAs (lncRNAs). Involved in various processes, such as epidermal stem cell differentiation, testis differentiation and maternal to zygotic transition during early development: acts by increasing protein synthesis; cytosine C(5)-methylation promoting tRNA stability and preventing mRNA decay. Methylates cytosine to 5-methylcytosine (m5C) at positions 34 and 48 of intron-containing tRNA(Leu)(CAA) precursors, and at positions 48, 49 and 50 of tRNA(Gly)(GCC) precursors. tRNA methylation is required generation of RNA fragments derived from tRNAs (tRFs). Also mediates C(5)-methylation of mitochondrial tRNAs. Catalyzes cytosine C(5)-methylation of mRNAs, leading to stabilize them and prevent mRNA decay. Cytosine C(5)-methylation of mRNAs also regulates mRNA export. Also mediates cytosine C(5)-methylation of non-coding RNAs, such as vault RNAs (vtRNAs), promoting their processing into regulatory small RNAs. Required for proper spindle assembly and chromosome segregation, independently of its methyltransferase activity. The sequence is that of RNA cytosine-C(5)-methyltransferase NSUN2 from Xenopus laevis (African clawed frog).